A 373-amino-acid chain; its full sequence is Chaperone protein DnaJ (373 aa).

Residues 5–71 (DYYEILGVSR…EKRAMYDKFG (67 aa)) form the J domain. The CR-type zinc finger occupies 144 to 226 (GVKIPLEYDR…CGGTGRIRKR (83 aa)). The Zn(2+) site is built by cysteine 157, cysteine 160, cysteine 174, cysteine 177, cysteine 200, cysteine 203, cysteine 214, and cysteine 217. CXXCXGXG motif repeat units lie at residues 157-164 (CEHCHGEG), 174-181 (CPKCHGTG), 200-207 (CNQCGGTG), and 214-221 (CRVCGGTG).

This sequence belongs to the DnaJ family. As to quaternary structure, homodimer. Zn(2+) serves as cofactor.

The protein localises to the cytoplasm. Participates actively in the response to hyperosmotic and heat shock by preventing the aggregation of stress-denatured proteins and by disaggregating proteins, also in an autonomous, DnaK-independent fashion. Unfolded proteins bind initially to DnaJ; upon interaction with the DnaJ-bound protein, DnaK hydrolyzes its bound ATP, resulting in the formation of a stable complex. GrpE releases ADP from DnaK; ATP binding to DnaK triggers the release of the substrate protein, thus completing the reaction cycle. Several rounds of ATP-dependent interactions between DnaJ, DnaK and GrpE are required for fully efficient folding. Also involved, together with DnaK and GrpE, in the DNA replication of plasmids through activation of initiation proteins. This chain is Chaperone protein DnaJ, found in Thermosipho melanesiensis (strain DSM 12029 / CIP 104789 / BI429).